The following is a 600-amino-acid chain: Chaperone protein DnaK (600 aa).

Threonine 175 carries the post-translational modification Phosphothreonine; by autocatalysis. The interval 572–600 (FAQQTQQQDPNNQKDDVTEATVTDDSTKK) is disordered. Polar residues predominate over residues 591-600 (ATVTDDSTKK).

The protein belongs to the heat shock protein 70 family.

Acts as a chaperone. The sequence is that of Chaperone protein DnaK from Ureaplasma urealyticum serovar 10 (strain ATCC 33699 / Western).